The following is a 235-amino-acid chain: Large ribosomal subunit protein uL1 (235 aa).

It belongs to the universal ribosomal protein uL1 family. As to quaternary structure, part of the 50S ribosomal subunit.

Functionally, binds directly to 23S rRNA. The L1 stalk is quite mobile in the ribosome, and is involved in E site tRNA release. Its function is as follows. Protein L1 is also a translational repressor protein, it controls the translation of the L11 operon by binding to its mRNA. The polypeptide is Large ribosomal subunit protein uL1 (Desulfotalea psychrophila (strain LSv54 / DSM 12343)).